The chain runs to 665 residues: FAD-dependent oxidoreductase domain-containing protein 2 (665 aa).

Positions 1-17 (MGPSGLLVALALHLAVC) are cleaved as a signal peptide. An N-linked (GlcNAc...) asparagine glycan is attached at Asn-136. Residues 642–665 (RWLGDHSTAPEPLTQSLDSNKEEL) are disordered. Residues 662–665 (KEEL) carry the Prevents secretion from ER motif.

It belongs to the FOXRED2 family. As to quaternary structure, interacts with SEL1L. May interact with OS9 and DNAJC10. Interacts with TXNDC16. Requires FAD as cofactor. In terms of processing, N-glycosylated.

The protein resides in the endoplasmic reticulum lumen. Probable flavoprotein which may function in endoplasmic reticulum associated degradation (ERAD). May bind non-native proteins in the endoplasmic reticulum and target them to the ubiquitination machinery for subsequent degradation. In Mus musculus (Mouse), this protein is FAD-dependent oxidoreductase domain-containing protein 2.